Reading from the N-terminus, the 167-residue chain is Ribosome maturation factor RimM (167 aa).

Residues 92-166 (DDEFYHTDLI…RIVADPPEGL (75 aa)) form the PRC barrel domain.

The protein belongs to the RimM family. Binds ribosomal protein uS19.

It localises to the cytoplasm. Functionally, an accessory protein needed during the final step in the assembly of 30S ribosomal subunit, possibly for assembly of the head region. Essential for efficient processing of 16S rRNA. May be needed both before and after RbfA during the maturation of 16S rRNA. It has affinity for free ribosomal 30S subunits but not for 70S ribosomes. This chain is Ribosome maturation factor RimM, found in Ruegeria pomeroyi (strain ATCC 700808 / DSM 15171 / DSS-3) (Silicibacter pomeroyi).